Consider the following 445-residue polypeptide: 23S rRNA (uracil(1939)-C(5))-methyltransferase RlmD (445 aa).

In terms of domain architecture, TRAM spans 12–70 (SKQLSSKLSLKVTQLDHLGAGIAHHDGKIVFINGALPGETVSVQLTEQKKKFARAKLLK). Residues cysteine 83, cysteine 89, cysteine 92, and cysteine 171 each contribute to the [4Fe-4S] cluster site. Residues glutamine 278, phenylalanine 307, asparagine 312, glutamate 328, aspartate 355, and aspartate 375 each contribute to the S-adenosyl-L-methionine site. Cysteine 401 acts as the Nucleophile in catalysis.

This sequence belongs to the class I-like SAM-binding methyltransferase superfamily. RNA M5U methyltransferase family. RlmD subfamily.

It carries out the reaction uridine(1939) in 23S rRNA + S-adenosyl-L-methionine = 5-methyluridine(1939) in 23S rRNA + S-adenosyl-L-homocysteine + H(+). In terms of biological role, catalyzes the formation of 5-methyl-uridine at position 1939 (m5U1939) in 23S rRNA. This chain is 23S rRNA (uracil(1939)-C(5))-methyltransferase RlmD, found in Shewanella halifaxensis (strain HAW-EB4).